We begin with the raw amino-acid sequence, 314 residues long: 3'-5' exoribonuclease YhaM (314 aa).

Residues 163–279 (HVVSMLNLAK…LHYIDNLDAK (117 aa)) enclose the HD domain.

Belongs to the YhaM family.

Shows a 3'-5' exoribonuclease activity. In Bacillus velezensis (strain DSM 23117 / BGSC 10A6 / LMG 26770 / FZB42) (Bacillus amyloliquefaciens subsp. plantarum), this protein is 3'-5' exoribonuclease YhaM.